Here is a 443-residue protein sequence, read N- to C-terminus: 26S proteasome regulatory subunit 4 homolog B (443 aa).

2 disordered regions span residues 1-55 and 87-108; these read MGQG…LPTV and RLKP…LRGT. Composition is skewed to basic and acidic residues over residues 12 to 28 and 87 to 106; these read QGDR…KKFE and RLKP…DDLR. 229–236 contacts ATP; it reads GEPGTGKT. Residues lysine 296 and lysine 433 each participate in a glycyl lysine isopeptide (Lys-Gly) (interchain with G-Cter in ubiquitin) cross-link.

This sequence belongs to the AAA ATPase family. In terms of assembly, component of the 19S regulatory particle (RP/PA700) base subcomplex of the 26S proteasome. The 26S proteasome is composed of a core protease (CP), known as the 20S proteasome, capped at one or both ends by the 19S regulatory particle (RP/PA700). The RP/PA700 complex is composed of at least 17 different subunits in two subcomplexes, the base and the lid, which form the portions proximal and distal to the 20S proteolytic core, respectively. As to expression, preferentially expressed in the root and shoot apical meristem.

Its subcellular location is the cytoplasm. It localises to the nucleus. In terms of biological role, the 26S protease is involved in the ATP-dependent degradation of ubiquitinated proteins. The regulatory (or ATPase) complex confers ATP dependency and substrate specificity to the 26S complex. Acts redundantly with RPT2A in the regulation of gametogenesis. With RPT2A plays a critical role in 26S proteasome assembly. This chain is 26S proteasome regulatory subunit 4 homolog B, found in Arabidopsis thaliana (Mouse-ear cress).